We begin with the raw amino-acid sequence, 1129 residues long: Large proline-rich protein bag6 (1129 aa).

The region spanning 1 to 76 (MEVTVKTLDS…HLVERAPPQT (76 aa)) is the Ubiquitin-like domain. Disordered regions lie at residues 69–108 (VERA…PERN), 187–235 (QPVN…SPSE), 347–402 (TGNG…HPHP), 490–518 (PAAP…VPGA), 550–606 (GSNT…QHLS), 654–692 (VPVS…ESLP), 942–967 (VPQA…NGAA), and 987–1009 (VPTI…QWAA). Over residues 73–105 (PPQTQPSTGGPSTSSSTSPSSSNAANVPGAGAP) the composition is skewed to low complexity. Composition is skewed to polar residues over residues 209-232 (RETL…SHPS) and 364-383 (HTPT…QPPS). 2 stretches are compositionally biased toward low complexity: residues 553-593 (TPSS…SSGP) and 655-666 (PVSTSPPQSASQ). A compositionally biased stretch (pro residues) spans 667 to 686 (APPPSSPSPPPAHSSPPPAA). Residues 947-956 (EASSQDQPME) are compositionally biased toward polar residues.

In terms of assembly, component of the bag6/bat3 complex.

Its subcellular location is the cytoplasm. The protein resides in the cytosol. It localises to the nucleus. The protein localises to the secreted. It is found in the extracellular exosome. Functionally, ATP-independent molecular chaperone preventing the aggregation of misfolded and hydrophobic patches-containing proteins. Functions as part of a cytosolic protein quality control complex, the bag6/bat3 complex, which maintains these client proteins in a soluble state and participates in their proper delivery to the endoplasmic reticulum or alternatively can promote their sorting to the proteasome where they undergo degradation. The bag6/bat3 complex is involved in the post-translational delivery of tail-anchored/type II transmembrane proteins to the endoplasmic reticulum membrane. Similarly, the bag6/bat3 complex also functions as a sorting platform for proteins of the secretory pathway that are mislocalized to the cytosol either delivering them to the proteasome for degradation or to the endoplasmic reticulum. The bag6/bat3 complex also plays a role in the endoplasmic reticulum-associated degradation (ERAD), a quality control mechanism that eliminates unwanted proteins of the endoplasmic reticulum through their retrotranslocation to the cytosol and their targeting to the proteasome. It maintains these retrotranslocated proteins in an unfolded yet soluble state condition in the cytosol to ensure their proper delivery to the proteasome. Also required for selective ubiquitin-mediated degradation of defective nascent chain polypeptides by the proteasome. Also involved in endoplasmic reticulum stress-induced pre-emptive quality control, a mechanism that selectively attenuates the translocation of newly synthesized proteins into the endoplasmic reticulum and reroutes them to the cytosol for proteasomal degradation. May ensure the proper degradation of these proteins and thereby protects the endoplasmic reticulum from protein overload upon stress. By stabilizing a large spectrum of proteins, may indirectly affect different biological processes including apoptosis. By controlling the steady-state expression of the IGF1R receptor, indirectly regulates the insulin-like growth factor receptor signaling pathway. Its function is as follows. When nuclear, may also act as a component of some chromatin regulator complex. In Xenopus tropicalis (Western clawed frog), this protein is Large proline-rich protein bag6.